We begin with the raw amino-acid sequence, 540 residues long: Light-independent protochlorophyllide reductase subunit B (540 aa).

Asp36 is a binding site for [4Fe-4S] cluster. Residue Asp287 is the Proton donor of the active site. 422 to 423 provides a ligand contact to substrate; it reads GL.

The protein belongs to the ChlB/BchB/BchZ family. Protochlorophyllide reductase is composed of three subunits; BchL, BchN and BchB. Forms a heterotetramer of two BchB and two BchN subunits. Requires [4Fe-4S] cluster as cofactor.

The catalysed reaction is chlorophyllide a + oxidized 2[4Fe-4S]-[ferredoxin] + 2 ADP + 2 phosphate = protochlorophyllide a + reduced 2[4Fe-4S]-[ferredoxin] + 2 ATP + 2 H2O. It participates in porphyrin-containing compound metabolism; bacteriochlorophyll biosynthesis (light-independent). Its function is as follows. Component of the dark-operative protochlorophyllide reductase (DPOR) that uses Mg-ATP and reduced ferredoxin to reduce ring D of protochlorophyllide (Pchlide) to form chlorophyllide a (Chlide). This reaction is light-independent. The NB-protein (BchN-BchB) is the catalytic component of the complex. The polypeptide is Light-independent protochlorophyllide reductase subunit B (Rhodopseudomonas palustris (strain TIE-1)).